We begin with the raw amino-acid sequence, 116 residues long: NADH-ubiquinone oxidoreductase chain 3 (116 aa).

Transmembrane regions (helical) follow at residues 3–23 (LISTVILIASALSLILILVSF), 56–76 (FFLIAILFLLFDLEIALLLPL), and 87–107 (LTFMWATSVLALLTLGLIYEW).

Belongs to the complex I subunit 3 family.

The protein resides in the mitochondrion membrane. The enzyme catalyses a ubiquinone + NADH + 5 H(+)(in) = a ubiquinol + NAD(+) + 4 H(+)(out). In terms of biological role, core subunit of the mitochondrial membrane respiratory chain NADH dehydrogenase (Complex I) that is believed to belong to the minimal assembly required for catalysis. Complex I functions in the transfer of electrons from NADH to the respiratory chain. The immediate electron acceptor for the enzyme is believed to be ubiquinone. This chain is NADH-ubiquinone oxidoreductase chain 3 (MT-ND3), found in Gadus morhua (Atlantic cod).